The following is a 272-amino-acid chain: Probable proteasome subunit alpha type-6 (272 aa).

The segment covering 243–261 (AARASRAAAEEPQAPTAEA) has biased composition (low complexity). Residues 243 to 272 (AARASRAAAEEPQAPTAEAILDSADAMETD) form a disordered region.

This sequence belongs to the peptidase T1A family. The 26S proteasome consists of a 20S proteasome core and two 19S regulatory subunits. The 20S proteasome core is composed of 28 subunits that are arranged in four stacked rings, resulting in a barrel-shaped structure. The two end rings are each formed by seven alpha subunits, and the two central rings are each formed by seven beta subunits. The catalytic chamber with the active sites is on the inside of the barrel.

The protein localises to the cytoplasm. Its subcellular location is the nucleus. Its function is as follows. The proteasome is a multicatalytic proteinase complex which is characterized by its ability to cleave peptides with Arg, Phe, Tyr, Leu, and Glu adjacent to the leaving group at neutral or slightly basic pH. The proteasome has an ATP-dependent proteolytic activity. The protein is Probable proteasome subunit alpha type-6 of Schizosaccharomyces pombe (strain 972 / ATCC 24843) (Fission yeast).